We begin with the raw amino-acid sequence, 235 residues long: tRNA (guanine-N(1)-)-methyltransferase (235 aa).

S-adenosyl-L-methionine contacts are provided by residues Gly-112 and 132 to 137; that span reads IGDYVI.

The protein belongs to the RNA methyltransferase TrmD family. Homodimer.

It localises to the cytoplasm. It catalyses the reaction guanosine(37) in tRNA + S-adenosyl-L-methionine = N(1)-methylguanosine(37) in tRNA + S-adenosyl-L-homocysteine + H(+). Functionally, specifically methylates guanosine-37 in various tRNAs. This is tRNA (guanine-N(1)-)-methyltransferase from Anaplasma marginale (strain St. Maries).